Reading from the N-terminus, the 324-residue chain is tRNA(Ile)-lysidine synthase (324 aa).

33–38 (SGGPDS) contacts ATP.

Belongs to the tRNA(Ile)-lysidine synthase family.

Its subcellular location is the cytoplasm. It catalyses the reaction cytidine(34) in tRNA(Ile2) + L-lysine + ATP = lysidine(34) in tRNA(Ile2) + AMP + diphosphate + H(+). Functionally, ligates lysine onto the cytidine present at position 34 of the AUA codon-specific tRNA(Ile) that contains the anticodon CAU, in an ATP-dependent manner. Cytidine is converted to lysidine, thus changing the amino acid specificity of the tRNA from methionine to isoleucine. In Thermobifida fusca (strain YX), this protein is tRNA(Ile)-lysidine synthase.